A 293-amino-acid chain; its full sequence is 33 kDa chaperonin (293 aa).

2 disulfides stabilise this stretch: Cys-237–Cys-239 and Cys-271–Cys-274.

It belongs to the HSP33 family. Under oxidizing conditions two disulfide bonds are formed involving the reactive cysteines. Under reducing conditions zinc is bound to the reactive cysteines and the protein is inactive.

The protein localises to the cytoplasm. In terms of biological role, redox regulated molecular chaperone. Protects both thermally unfolding and oxidatively damaged proteins from irreversible aggregation. Plays an important role in the bacterial defense system toward oxidative stress. The sequence is that of 33 kDa chaperonin from Haemophilus influenzae (strain PittGG).